The chain runs to 196 residues: Large ribosomal subunit protein uL5 (196 aa).

This sequence belongs to the universal ribosomal protein uL5 family. In terms of assembly, part of the 50S ribosomal subunit; part of the 5S rRNA/L5/L18/L25 subcomplex. Contacts the 5S rRNA and the P site tRNA. Forms a bridge to the 30S subunit in the 70S ribosome.

In terms of biological role, this is one of the proteins that bind and probably mediate the attachment of the 5S RNA into the large ribosomal subunit, where it forms part of the central protuberance. In the 70S ribosome it contacts protein S13 of the 30S subunit (bridge B1b), connecting the 2 subunits; this bridge is implicated in subunit movement. Contacts the P site tRNA; the 5S rRNA and some of its associated proteins might help stabilize positioning of ribosome-bound tRNAs. This is Large ribosomal subunit protein uL5 from Chlorobium phaeobacteroides (strain BS1).